The sequence spans 595 residues: MNAIARQEPFDLNDPALRARAVAAARGDAPFDMLITGGRLLDAVTGLIREADIGLVGALIASVHAPASRTDAVEIIDATGGILTPGLIDMHMHVESSMVTPAEYASAVLPHGVTTVVWDPHEFGNVQGLDGVRWAIEAARTLPLRMILLAPSCVPSAPGLELAGADFDAAVIAEMLRSPAVGGVAEVMNMRGVIDGDPRMSAIVNSGLASGKLVCGHARGLTGADLNAFMAAGVTSDHELTSGADLAAKLSAGLTIELRGSHDHLLQEFVEVLNGLGHLPATVTLCTDDVFPDELYQSGGLDEVARRLVRYGMKPEWALRAATFNAAQRLKRSDLGLVASGRRADLVLFEDLTELRARLVISDGRIVARNGSMEAAVQPLDTAPLINSTKLPPLTESDFRVPAKGARVRIATIDRPRFTQWGEAETEIRDGFVVPPAGSAMIAVAHRHGKAGGTPRIGFLTGWGEWRGAFCTTVSHDSHNLTVFGGDARDMALAANAVIKAGGGLAVAKDGAIQAILPLPLSGLVTDASLKDTASAFSDIRKAMDKIVDWKPPYRVFKACFGATLACNAGPHQTDRGIADVTTGKVLESPVLEIF.

Belongs to the metallo-dependent hydrolases superfamily. Adenine deaminase family. Mn(2+) is required as a cofactor.

The enzyme catalyses adenine + H2O + H(+) = hypoxanthine + NH4(+). This Rhizobium etli (strain ATCC 51251 / DSM 11541 / JCM 21823 / NBRC 15573 / CFN 42) protein is Adenine deaminase 2.